Consider the following 62-residue polypeptide: Large ribosomal subunit protein bL28 (62 aa).

The protein belongs to the bacterial ribosomal protein bL28 family.

In Syntrophomonas wolfei subsp. wolfei (strain DSM 2245B / Goettingen), this protein is Large ribosomal subunit protein bL28.